Consider the following 172-residue polypeptide: Putative phosphoesterase BCE_1348 (172 aa).

Catalysis depends on His34, which acts as the Proton donor. Short sequence motifs (HXTX) lie at residues His34–Leu37 and His115–Ile118. Residue His115 is the Proton acceptor of the active site.

This sequence belongs to the 2H phosphoesterase superfamily. YjcG family.

This Bacillus cereus (strain ATCC 10987 / NRS 248) protein is Putative phosphoesterase BCE_1348.